A 264-amino-acid polypeptide reads, in one-letter code: 5'-nucleotidase SurE (264 aa).

Residues Asp8, Asp9, Ser39, and Asn95 each contribute to the a divalent metal cation site.

It belongs to the SurE nucleotidase family. It depends on a divalent metal cation as a cofactor.

Its subcellular location is the cytoplasm. The catalysed reaction is a ribonucleoside 5'-phosphate + H2O = a ribonucleoside + phosphate. Functionally, nucleotidase that shows phosphatase activity on nucleoside 5'-monophosphates. In Syntrophomonas wolfei subsp. wolfei (strain DSM 2245B / Goettingen), this protein is 5'-nucleotidase SurE.